A 247-amino-acid polypeptide reads, in one-letter code: tRNA (guanine-N(1)-)-methyltransferase (247 aa).

Residue glycine 126 participates in S-adenosyl-L-methionine binding.

Belongs to the RNA methyltransferase TrmD family. As to quaternary structure, homodimer.

The protein localises to the cytoplasm. The catalysed reaction is guanosine(37) in tRNA + S-adenosyl-L-methionine = N(1)-methylguanosine(37) in tRNA + S-adenosyl-L-homocysteine + H(+). In terms of biological role, specifically methylates guanosine-37 in various tRNAs. The polypeptide is tRNA (guanine-N(1)-)-methyltransferase (Jannaschia sp. (strain CCS1)).